We begin with the raw amino-acid sequence, 709 residues long: MAAVSNESQNPVDPGSSKLQFAPFSSALNVGFWHELTQKKLNEYRLDETPKVIKGYYYNGDPSGFPARLTLEYSAFDINASIPARCCPAFGTLYNTNTFETFKSCDKKSLLEKEANEIWESIKSGAALENPMLLNRFLLLTFADLKKYHFYYWFCYPALCFPDGIHVIQKPVCLGDRFSLNQIQALQKAYDELCQTEGVTAFPYFLIKYHDNSVVVSPLKKWDGFFQDQGGKVTVGVYDPCNLSHYPGWPLRNFLILASHKWGNILQSIEVLCFRDRTMQGVRDITHSIIFEIKLPQGAFGPDCPKAVGWEKNQKGGMGPRVVNLSECMDPKRLAESSVDLNLKLMCWRLVPTLDLEKIVSAKCLLLGAGTLGCSVARTLMGWGVRKITFVDNARISYSNPVRQPLYEFEDCLSGGKPKALAAAERLQKIFPGVNSEGYNMSIPMPGHPVNFSEVTMAQARKDVATLEELIDAHDVVFLLMDTRESRWLPAVIAASKRKLVINAALGFDTFVVMRHGLKKPKQQETGNACFSTAPGPSDLLGSSLFSNIPGYKLGCYFCNDVVAPGDSTRDRTLDQQCTVSRPGLAMIAGALAVELMVSVLQHPEGGYAVASSSDDRMNEPPTSLGLVPHQIRGFLSRFDNVLPVSLAFDKCTACSPKVLDQYEREGFNFLAKVFNSSHSFLEDLTGLTLLHQETQAAEIWDMSDDETV.

Residue C578 is the Glycyl thioester intermediate of the active site.

It belongs to the ATG7 family. As to quaternary structure, homodimer. Interacts with ATG3 and ATG12. The complex, composed of ATG3 and ATG7, plays a role in the conjugation of ATG12 to ATG5.

Its subcellular location is the cytoplasm. The protein resides in the preautophagosomal structure. Its function is as follows. E1-like activating enzyme involved in the 2 ubiquitin-like systems required for cytoplasm to vacuole transport (Cvt) and autophagy. Activates ATG12 for its conjugation with ATG5 as well as the ATG8 family proteins for their conjugation with phosphatidylethanolamine. Both systems are needed for the ATG8 association to Cvt vesicles and autophagosomes membranes. Required for autophagic death induced by caspase-8 inhibition. Facilitates LC3-I lipidation with phosphatidylethanolamine to form LC3-II which is found on autophagosomal membranes. Required for mitophagy which contributes to regulate mitochondrial quantity and quality by eliminating the mitochondria to a basal level to fulfill cellular energy requirements and preventing excess ROS production. Modulates p53/TP53 activity to regulate cell cycle and survival during metabolic stress. Plays a role in regulating the liver clock and glucose metabolism by mediating the autophagic degradation of CRY1 (clock repressor) in a time-dependent manner. This chain is Ubiquitin-like modifier-activating enzyme ATG7 (ATG7), found in Gallus gallus (Chicken).